Here is a 314-residue protein sequence, read N- to C-terminus: Cytochrome f (314 aa).

Positions 1 to 30 (MATNKFFKSLLFTLTIAISSFGFCVENSSA) are cleaved as a signal peptide. Positions 31, 51, 54, and 55 each coordinate heme. The chain crosses the membrane as a helical span at residues 280-300 (ILGYLAFCFCLLLTQVLLVLK).

The protein belongs to the cytochrome f family. As to quaternary structure, the 4 large subunits of the cytochrome b6-f complex are cytochrome b6, subunit IV (17 kDa polypeptide, petD), cytochrome f and the Rieske protein, while the 4 small subunits are PetG, PetL, PetM and PetN. The complex functions as a dimer. The cofactor is heme.

The protein resides in the plastid. It is found in the chloroplast thylakoid membrane. Component of the cytochrome b6-f complex, which mediates electron transfer between photosystem II (PSII) and photosystem I (PSI), cyclic electron flow around PSI, and state transitions. The chain is Cytochrome f from Thalassiosira pseudonana (Marine diatom).